The primary structure comprises 227 residues: ATP synthase F(0) complex subunit a (227 aa).

6 helical membrane passes run L14–P34, W69–L89, Q98–L118, E132–I152, F180–L200, and L202–Y222.

The protein belongs to the ATPase A chain family. As to quaternary structure, component of the ATP synthase complex composed at least of ATP5F1A/subunit alpha, ATP5F1B/subunit beta, ATP5MC1/subunit c (homooctomer), MT-ATP6/subunit a, MT-ATP8/subunit 8, ATP5ME/subunit e, ATP5MF/subunit f, ATP5MG/subunit g, ATP5MK/subunit k, ATP5MJ/subunit j, ATP5F1C/subunit gamma, ATP5F1D/subunit delta, ATP5F1E/subunit epsilon, ATP5PF/subunit F6, ATP5PB/subunit b, ATP5PD/subunit d, ATP5PO/subunit OSCP. ATP synthase complex consists of a soluble F(1) head domain (subunits alpha(3) and beta(3)) - the catalytic core - and a membrane F(0) domain - the membrane proton channel (subunits c, a, 8, e, f, g, k and j). These two domains are linked by a central stalk (subunits gamma, delta, and epsilon) rotating inside the F1 region and a stationary peripheral stalk (subunits F6, b, d, and OSCP). Interacts with DNAJC30; interaction is direct.

The protein localises to the mitochondrion inner membrane. The enzyme catalyses H(+)(in) = H(+)(out). In terms of biological role, subunit a, of the mitochondrial membrane ATP synthase complex (F(1)F(0) ATP synthase or Complex V) that produces ATP from ADP in the presence of a proton gradient across the membrane which is generated by electron transport complexes of the respiratory chain. ATP synthase complex consist of a soluble F(1) head domain - the catalytic core - and a membrane F(1) domain - the membrane proton channel. These two domains are linked by a central stalk rotating inside the F(1) region and a stationary peripheral stalk. During catalysis, ATP synthesis in the catalytic domain of F(1) is coupled via a rotary mechanism of the central stalk subunits to proton translocation. With the subunit c (ATP5MC1), forms the proton-conducting channel in the F(0) domain, that contains two crucial half-channels (inlet and outlet) that facilitate proton movement from the mitochondrial intermembrane space (IMS) into the matrix. Protons are taken up via the inlet half-channel and released through the outlet half-channel, following a Grotthuss mechanism. The polypeptide is ATP synthase F(0) complex subunit a (Tetraodon nigroviridis (Spotted green pufferfish)).